The chain runs to 91 residues: Small ribosomal subunit protein bS18 (91 aa).

Belongs to the bacterial ribosomal protein bS18 family. Part of the 30S ribosomal subunit. Forms a tight heterodimer with protein bS6.

Binds as a heterodimer with protein bS6 to the central domain of the 16S rRNA, where it helps stabilize the platform of the 30S subunit. The sequence is that of Small ribosomal subunit protein bS18 from Paraburkholderia xenovorans (strain LB400).